Consider the following 369-residue polypeptide: Methionine import ATP-binding protein MetN 2 (369 aa).

Residues valine 33 to leucine 270 form the ABC transporter domain. An ATP-binding site is contributed by glycine 67–serine 74.

This sequence belongs to the ABC transporter superfamily. Methionine importer (TC 3.A.1.24) family. In terms of assembly, the complex is composed of two ATP-binding proteins (MetN), two transmembrane proteins (MetI) and a solute-binding protein (MetQ).

The protein localises to the cell inner membrane. The catalysed reaction is L-methionine(out) + ATP + H2O = L-methionine(in) + ADP + phosphate + H(+). The enzyme catalyses D-methionine(out) + ATP + H2O = D-methionine(in) + ADP + phosphate + H(+). In terms of biological role, part of the ABC transporter complex MetNIQ involved in methionine import. Responsible for energy coupling to the transport system. The chain is Methionine import ATP-binding protein MetN 2 from Pseudomonas putida (strain ATCC 47054 / DSM 6125 / CFBP 8728 / NCIMB 11950 / KT2440).